A 199-amino-acid chain; its full sequence is Potassium-transporting ATPase KdpC subunit (199 aa).

A helical membrane pass occupies residues 21–43 (LALLFVCGVVYTGTVTQLGGALF).

Belongs to the KdpC family. The system is composed of three essential subunits: KdpA, KdpB and KdpC.

It is found in the cell inner membrane. Functionally, part of the high-affinity ATP-driven potassium transport (or Kdp) system, which catalyzes the hydrolysis of ATP coupled with the electrogenic transport of potassium into the cytoplasm. This subunit acts as a catalytic chaperone that increases the ATP-binding affinity of the ATP-hydrolyzing subunit KdpB by the formation of a transient KdpB/KdpC/ATP ternary complex. This chain is Potassium-transporting ATPase KdpC subunit, found in Shewanella putrefaciens (strain CN-32 / ATCC BAA-453).